The chain runs to 454 residues: Bifunctional protein GlmU (454 aa).

A pyrophosphorylase region spans residues 1 to 226 (MALNVVILAA…AIEVEGANNR (226 aa)). Residues 8 to 11 (LAAG), K22, Q73, 78 to 79 (GT), 100 to 102 (YGD), G137, E151, N166, and N224 contribute to the UDP-N-acetyl-alpha-D-glucosamine site. D102 serves as a coordination point for Mg(2+). Residue N224 coordinates Mg(2+). The linker stretch occupies residues 227-247 (VQLAQLERAYQAREAEKLMIA). Positions 248-454 (GANLRDPSRI…GWQRPVKIKK (207 aa)) are N-acetyltransferase. UDP-N-acetyl-alpha-D-glucosamine contacts are provided by R330 and K348. H360 acts as the Proton acceptor in catalysis. The UDP-N-acetyl-alpha-D-glucosamine site is built by Y363 and N374. Acetyl-CoA is bound by residues A377, 383 to 384 (NY), S402, A420, and R437.

It in the N-terminal section; belongs to the N-acetylglucosamine-1-phosphate uridyltransferase family. The protein in the C-terminal section; belongs to the transferase hexapeptide repeat family. As to quaternary structure, homotrimer. Requires Mg(2+) as cofactor.

The protein resides in the cytoplasm. It catalyses the reaction alpha-D-glucosamine 1-phosphate + acetyl-CoA = N-acetyl-alpha-D-glucosamine 1-phosphate + CoA + H(+). The catalysed reaction is N-acetyl-alpha-D-glucosamine 1-phosphate + UTP + H(+) = UDP-N-acetyl-alpha-D-glucosamine + diphosphate. The protein operates within nucleotide-sugar biosynthesis; UDP-N-acetyl-alpha-D-glucosamine biosynthesis; N-acetyl-alpha-D-glucosamine 1-phosphate from alpha-D-glucosamine 6-phosphate (route II): step 2/2. It functions in the pathway nucleotide-sugar biosynthesis; UDP-N-acetyl-alpha-D-glucosamine biosynthesis; UDP-N-acetyl-alpha-D-glucosamine from N-acetyl-alpha-D-glucosamine 1-phosphate: step 1/1. Its pathway is bacterial outer membrane biogenesis; LPS lipid A biosynthesis. Functionally, catalyzes the last two sequential reactions in the de novo biosynthetic pathway for UDP-N-acetylglucosamine (UDP-GlcNAc). The C-terminal domain catalyzes the transfer of acetyl group from acetyl coenzyme A to glucosamine-1-phosphate (GlcN-1-P) to produce N-acetylglucosamine-1-phosphate (GlcNAc-1-P), which is converted into UDP-GlcNAc by the transfer of uridine 5-monophosphate (from uridine 5-triphosphate), a reaction catalyzed by the N-terminal domain. This Shewanella sp. (strain ANA-3) protein is Bifunctional protein GlmU.